Reading from the N-terminus, the 332-residue chain is Ketol-acid reductoisomerase (NADP(+)) (332 aa).

Residues 2–182 (AKVYIDKDAS…GATRAGVIET (181 aa)) form the KARI N-terminal Rossmann domain. Residues 25 to 28 (YGSQ), S53, and 83 to 86 (DMVQ) contribute to the NADP(+) site. The active site involves H108. G134 serves as a coordination point for NADP(+). One can recognise a KARI C-terminal knotted domain in the interval 183–328 (TFKEETETDL…RQIREISLRG (146 aa)). Mg(2+) is bound by residues D191, E195, E227, and E231. S252 lines the substrate pocket.

This sequence belongs to the ketol-acid reductoisomerase family. Mg(2+) serves as cofactor.

It carries out the reaction (2R)-2,3-dihydroxy-3-methylbutanoate + NADP(+) = (2S)-2-acetolactate + NADPH + H(+). The catalysed reaction is (2R,3R)-2,3-dihydroxy-3-methylpentanoate + NADP(+) = (S)-2-ethyl-2-hydroxy-3-oxobutanoate + NADPH + H(+). The protein operates within amino-acid biosynthesis; L-isoleucine biosynthesis; L-isoleucine from 2-oxobutanoate: step 2/4. It functions in the pathway amino-acid biosynthesis; L-valine biosynthesis; L-valine from pyruvate: step 2/4. Involved in the biosynthesis of branched-chain amino acids (BCAA). Catalyzes an alkyl-migration followed by a ketol-acid reduction of (S)-2-acetolactate (S2AL) to yield (R)-2,3-dihydroxy-isovalerate. In the isomerase reaction, S2AL is rearranged via a Mg-dependent methyl migration to produce 3-hydroxy-3-methyl-2-ketobutyrate (HMKB). In the reductase reaction, this 2-ketoacid undergoes a metal-dependent reduction by NADPH to yield (R)-2,3-dihydroxy-isovalerate. This Sulfurisphaera tokodaii (strain DSM 16993 / JCM 10545 / NBRC 100140 / 7) (Sulfolobus tokodaii) protein is Ketol-acid reductoisomerase (NADP(+)).